An 84-amino-acid polypeptide reads, in one-letter code: Toxin Tf2 (84 aa).

Residues 1–20 (MKRFLLFISILMMIGTIVVG) form the signal peptide. In terms of domain architecture, LCN-type CS-alpha/beta spans 21-83 (KEGYAMDHEG…VWDYATNKCG (63 aa)). 4 disulfide bridges follow: C31–C82, C35–C58, C43–C63, and C47–C65. Residue C82 is modified to Cysteine amide.

This sequence belongs to the long (4 C-C) scorpion toxin superfamily. Sodium channel inhibitor family. Beta subfamily. In terms of processing, contains 4 disulfide bonds. As to expression, expressed by the venom gland.

The protein resides in the secreted. Its function is as follows. Beta toxins bind voltage-independently at site-4 of sodium channels (Nav) and shift the voltage of activation toward more negative potentials thereby affecting sodium channel activation and promoting spontaneous and repetitive firing. This toxin is active against hNav1.3/SCN3A. This is Toxin Tf2 from Tityus fasciolatus (Central Brazilian scorpion).